The chain runs to 412 residues: MYRLKCDVKSYGWGKVGHESLAAKLAEAGYGFEVDPNTPYAELWMGSHPSGPSFVMQTGKPLSELLTPETVGEKVYKKYGKQLPFLFKVLSINKVLSIQAHPDKPLGKQLHKTNPKEYKDDNHKPEMAVALTEFDALCGFRPVKQIEQFLDSIAPLREFVGEEAVRQFKGTVKQDERKALETLFNELMHKDEKRIQEFTPQLVQLAKSDANNFGGTEYGGKAFSDLIIHLNSQFPDDIGLFVTPFLNYVRLHPGEAVFLRALDPHAYVSGNIIECMAASDNVIRLGFTPKFKDIETLVNNLTYQTADAKSQLTQPVPFAKACGSGKTLLYDPPIEEFSILQTKVSPGQKQCIRGINGPSILLVTEGSGILNGDKGDVASISPGFVYFISANFPLTISATSEPVVVYQAFCEI.

Residues Gln-99, His-101, Glu-126, and His-265 each coordinate Zn(2+). Residue Arg-284 is part of the active site.

Belongs to the mannose-6-phosphate isomerase type 1 family. Zn(2+) serves as cofactor.

Its subcellular location is the cytoplasm. It localises to the nucleus. It catalyses the reaction D-mannose 6-phosphate = D-fructose 6-phosphate. It functions in the pathway nucleotide-sugar biosynthesis; GDP-alpha-D-mannose biosynthesis; alpha-D-mannose 1-phosphate from D-fructose 6-phosphate: step 1/2. Involved in the synthesis of the GDP-mannose and dolichol-phosphate-mannose required for a number of critical mannosyl transfer reactions. This is Mannose-6-phosphate isomerase (pmi40) from Schizosaccharomyces pombe (strain 972 / ATCC 24843) (Fission yeast).